The chain runs to 293 residues: Homoserine kinase (293 aa).

80 to 90 (RPASGLGSSAA) contacts ATP.

It belongs to the GHMP kinase family. Homoserine kinase subfamily.

The protein localises to the cytoplasm. The enzyme catalyses L-homoserine + ATP = O-phospho-L-homoserine + ADP + H(+). It participates in amino-acid biosynthesis; L-threonine biosynthesis; L-threonine from L-aspartate: step 4/5. Functionally, catalyzes the ATP-dependent phosphorylation of L-homoserine to L-homoserine phosphate. The protein is Homoserine kinase of Halorubrum lacusprofundi (strain ATCC 49239 / DSM 5036 / JCM 8891 / ACAM 34).